We begin with the raw amino-acid sequence, 463 residues long: NADH dehydrogenase [ubiquinone] iron-sulfur protein 2, mitochondrial (463 aa).

The N-terminal 33 residues, 1-33 (MAALRALGGLRGVAAQVLRPGAGVRLPIQPSRG), are a transit peptide targeting the mitochondrion. Position 62 is an N6-acetyllysine (Lys-62). At Arg-118 the chain carries Symmetric dimethylarginine. [4Fe-4S] cluster is bound by residues Cys-326, Cys-332, and Cys-347.

This sequence belongs to the complex I 49 kDa subunit family. Core subunit of respiratory chain NADH dehydrogenase (Complex I) which is composed of 45 different subunits. Component of the iron-sulfur (IP) fragment of the enzyme. Interacts with NDUFAF3. Interacts with NDUFAF7. Interacts with CERS2. Requires [4Fe-4S] cluster as cofactor. Dimethylation at Arg-118 by NDUFAF7 takes place after NDUFS2 assembles into the complex I, leading to stabilize the early intermediate complex.

The protein resides in the mitochondrion inner membrane. The enzyme catalyses a ubiquinone + NADH + 5 H(+)(in) = a ubiquinol + NAD(+) + 4 H(+)(out). Core subunit of the mitochondrial membrane respiratory chain NADH dehydrogenase (Complex I) which catalyzes electron transfer from NADH through the respiratory chain, using ubiquinone as an electron acceptor. Essential for the catalytic activity and assembly of complex I. Redox-sensitive, critical component of the oxygen-sensing pathway in the pulmonary vasculature which plays a key role in acute pulmonary oxygen-sensing and hypoxic pulmonary vasoconstriction. Plays an important role in carotid body sensing of hypoxia. Essential for glia-like neural stem and progenitor cell proliferation, differentiation and subsequent oligodendrocyte or neuronal maturation. In Pongo pygmaeus (Bornean orangutan), this protein is NADH dehydrogenase [ubiquinone] iron-sulfur protein 2, mitochondrial (NDUFS2).